The sequence spans 224 residues: ATP-dependent dethiobiotin synthetase BioD (224 aa).

Residue 14–19 (GIGKTV) participates in ATP binding. Position 18 (Thr18) interacts with Mg(2+). Lys39 is a catalytic residue. Ser43 contributes to the substrate binding site. ATP is bound by residues Asp56, 117 to 120 (EGVG), and 177 to 178 (NE). Positions 56 and 117 each coordinate Mg(2+).

This sequence belongs to the dethiobiotin synthetase family. In terms of assembly, homodimer. It depends on Mg(2+) as a cofactor.

Its subcellular location is the cytoplasm. It carries out the reaction (7R,8S)-7,8-diammoniononanoate + CO2 + ATP = (4R,5S)-dethiobiotin + ADP + phosphate + 3 H(+). It participates in cofactor biosynthesis; biotin biosynthesis; biotin from 7,8-diaminononanoate: step 1/2. Catalyzes a mechanistically unusual reaction, the ATP-dependent insertion of CO2 between the N7 and N8 nitrogen atoms of 7,8-diaminopelargonic acid (DAPA, also called 7,8-diammoniononanoate) to form a ureido ring. This Xanthomonas campestris pv. campestris (strain B100) protein is ATP-dependent dethiobiotin synthetase BioD.